The following is a 112-amino-acid chain: Large ribosomal subunit protein eL30 (112 aa).

This sequence belongs to the eukaryotic ribosomal protein eL30 family.

This chain is Large ribosomal subunit protein eL30 (RPL30), found in Euphorbia esula (Leafy spurge).